The primary structure comprises 264 residues: MESGKMASPKSMPKDAQMMAQILKDMGITEYEPRVINQMLEFAFRYVTTILDDAKIYSSHAKKPTVDADDVRLAIQCRADQSFTSPPPRDFLLDIARQRNQTPLPLIKPYSGPRLPPDRYCLTAPNYRLKSLQKKAPTPAGRITVPRLSVGSVSSRPSTPTLGTPTPQAMSVSTKVGTPMSLTGQRFTVQMPASQSPAVKASIPATPAVQNVLINPSLIGSKNILITTNMVSQNTANESANALKRKREEEDDDDDDDDDDYDNL.

Lysine 5 carries the N6-acetyllysine modification. A phosphoserine mark is found at serine 149, serine 152, serine 155, and serine 158. The interval 150–174 (VGSVSSRPSTPTLGTPTPQAMSVST) is disordered. The span at 151–174 (GSVSSRPSTPTLGTPTPQAMSVST) shows a compositional bias: polar residues. 4 positions are modified to phosphothreonine: threonine 159, threonine 161, threonine 164, and threonine 178. A phosphoserine mark is found at serine 181 and serine 196. Residues 233–264 (QNTANESANALKRKREEEDDDDDDDDDDYDNL) are disordered. Acidic residues predominate over residues 249-264 (EEDDDDDDDDDDYDNL).

It belongs to the TAF9 family. Component of the TFIID basal transcription factor complex, composed of TATA-box-binding protein TBP, and a number of TBP-associated factors (TAFs), including TAF1, TAF2, TAF3, TAF4, TAF5, TAF6, TAF7, TAF8, TAF9, TAF10, TAF11, TAF12 and TAF13. Component of the TATA-binding protein-free TAF complex (TFTC), the PCAF histone acetylase complex and the STAGA transcription coactivator-HAT complex. The PCAF complex consists at least of TADA2L/ADA2, SUPT3H/SPT3, TADA3L/ADA3, TAF5L/PAF65-beta, TAF6L/PAF65-alpha, TAF10/TAFII30, TAF12/TAFII20, TAF9/TAFII31 and TRRAP. The STAGA transcription coactivator-HAT complex consists at least of SUPT3H, GCN5L2, SUPT7L, TAF5L, TAF6L, TADA3L, TAD1L, TAF10, TAF12, TRRAP and TAF9. Binds N-terminal domain of p53/TP53 which is essential for transcription. Component of some MLL1/MLL complex, at least composed of the core components KMT2A/MLL1, ASH2L, HCFC1/HCF1, WDR5 and RBBP5, as well as the facultative components BACC1, CHD8, E2F6, HSP70, INO80C, KANSL1, LAS1L, MAX, MCRS1, MGA, MYST1/MOF, PELP1, PHF20, PRP31, RING2, RUVB1/TIP49A, RUVB2/TIP49B, SENP3, TAF1, TAF4, TAF6, TAF7, TAF9 and TEX10. Binds TFIIB and the Herpes simplex virus activator VP16. Forms a heterodimer with TAF6 in a complex with the TAF4B-TAF12 heterodimer. Also interacts with TAF5. Binds directly DNA. Increased DNA binding when complexed with TAF6.

The protein localises to the nucleus. Functionally, the TFIID basal transcription factor complex plays a major role in the initiation of RNA polymerase II (Pol II)-dependent transcription. TFIID recognizes and binds promoters with or without a TATA box via its subunit TBP, a TATA-box-binding protein, and promotes assembly of the pre-initiation complex (PIC). The TFIID complex consists of TBP and TBP-associated factors (TAFs), including TAF1, TAF2, TAF3, TAF4, TAF5, TAF6, TAF7, TAF8, TAF9, TAF10, TAF11, TAF12 and TAF13. TAF9 is also a component of the TBP-free TAFII complex (TFTC), the PCAF histone acetylase complex and the STAGA transcription coactivator-HAT complex. TAF9 and its paralog TAF9B are involved in transcriptional activation as well as repression of distinct but overlapping sets of genes. Essential for cell viability. May have a role in gene regulation associated with apoptosis. This chain is Transcription initiation factor TFIID subunit 9, found in Rattus norvegicus (Rat).